The primary structure comprises 222 residues: PKHD-type hydroxylase PCC8801_2196 (222 aa).

Residues 78-175 form the Fe2OG dioxygenase domain; it reads RIHSLLFSRY…RLVVVGWIES (98 aa). The Fe cation site is built by H96, D98, and H156. Position 166 (R166) interacts with 2-oxoglutarate.

Fe(2+) is required as a cofactor. It depends on L-ascorbate as a cofactor.

This Rippkaea orientalis (strain PCC 8801 / RF-1) (Cyanothece sp. (strain PCC 8801)) protein is PKHD-type hydroxylase PCC8801_2196.